The sequence spans 583 residues: Orphan steroid hormone receptor 2 (583 aa).

Residues 84 to 159 (IELCAVCGDK…MGMKSDSVQC (76 aa)) constitute a DNA-binding region (nuclear receptor). 2 consecutive NR C4-type zinc fingers follow at residues 87–107 (CAVC…CEGC) and 123–142 (CRGN…CQYC). Residues 248–563 (TLASVVTSLA…SIIPYILRME (316 aa)) form the NR LBD domain.

The protein belongs to the nuclear hormone receptor family. NR2 subfamily. In terms of assembly, binds DNA as a monomer. As to expression, expressed uniformly in the early embryo. In contrast, larval expression is localized to the epaulettes and mouth epithelium. Expressed in multiple adult organs including lantern muscle, tubefeet, intestine, coelomocytes and gonads. In the adult ovaries and testes, expression is specifically localized to the smooth muscle epithelial layer of cells which surround the ovarioles and acini, respectively (at protein level).

It is found in the cytoplasm. The protein localises to the nucleus. Its function is as follows. Orphan nuclear receptor. Binds to the hormone response element in the upstream promoter region of the CYIIIB gene in vitro. Both isoform 1 and isoform 2 bind DNA. The polypeptide is Orphan steroid hormone receptor 2 (Strongylocentrotus purpuratus (Purple sea urchin)).